Reading from the N-terminus, the 455-residue chain is GTPase Der (455 aa).

EngA-type G domains follow at residues 3–167 (FTIA…PEPA) and 184–359 (IRVA…AVWN). Residues 9–16 (GRPNVGKS), 56–60 (DTAGL), 119–122 (NKSE), 190–197 (GRPNAGKS), 237–241 (DTAGL), and 302–305 (NKWD) contribute to the GTP site. The 85-residue stretch at 360–444 (RRVATALLNR…PIRITLREKA (85 aa)) folds into the KH-like domain.

It belongs to the TRAFAC class TrmE-Era-EngA-EngB-Septin-like GTPase superfamily. EngA (Der) GTPase family. Associates with the 50S ribosomal subunit.

Functionally, GTPase that plays an essential role in the late steps of ribosome biogenesis. This Nitrobacter winogradskyi (strain ATCC 25391 / DSM 10237 / CIP 104748 / NCIMB 11846 / Nb-255) protein is GTPase Der.